We begin with the raw amino-acid sequence, 637 residues long: Chaperone protein DnaK (637 aa).

At T196 the chain carries Phosphothreonine; by autocatalysis. Positions 598–637 are disordered; sequence AEAPGADAPEGQAPQDGGSKKGGEGAVENAEYEVIDGDGK. Residues 627 to 637 show a composition bias toward acidic residues; that stretch reads AEYEVIDGDGK.

It belongs to the heat shock protein 70 family.

Acts as a chaperone. The sequence is that of Chaperone protein DnaK from Chlorobium luteolum (strain DSM 273 / BCRC 81028 / 2530) (Pelodictyon luteolum).